A 46-amino-acid chain; its full sequence is Replication-associated protein (46 aa).

Functionally, seems to play a role in virus replication. This Solanum tuberosum (Potato) protein is Replication-associated protein.